The primary structure comprises 64 residues: Sulfur carrier protein ThiS (64 aa).

A 1-thioglycine; alternate modification is found at Gly64. Glycyl adenylate; alternate is present on Gly64. Gly64 is covalently cross-linked (Glycyl cysteine thioester (Gly-Cys) (interchain with C-192 in TtuC); alternate).

Belongs to the sulfur carrier protein ThiS family. In terms of processing, C-terminal thiocarboxylation occurs in 2 steps, it is first acyl-adenylated (-COAMP) by TtuC, then thiocarboxylated (-COSH) by the cysteine desulfurases IscS or SufS.

Its pathway is cofactor biosynthesis; thiamine diphosphate biosynthesis. Is the sulfur donor in the synthesis of the thiazole phosphate moiety of thiamine phosphate. The chain is Sulfur carrier protein ThiS from Thermus thermophilus (strain ATCC BAA-163 / DSM 7039 / HB27).